Reading from the N-terminus, the 536-residue chain is Probable galacturonosyltransferase 10 (536 aa).

Residues 1–16 (MRRRGGDSFRRAGRRK) are Cytoplasmic-facing. Residues 17–37 (ISNVVWWVLSGIALLLFFLIL) traverse the membrane as a helical; Signal-anchor for type II membrane protein segment. At 38–536 (SKAGHIEPRP…SPFMQQCNFH (499 aa)) the chain is on the lumenal side. Residues asparagine 64, asparagine 246, asparagine 300, asparagine 403, and asparagine 436 are each glycosylated (N-linked (GlcNAc...) asparagine).

The protein belongs to the glycosyltransferase 8 family. As to expression, expressed in roots, inflorescences, siliques, leaves and stems.

The protein resides in the golgi apparatus membrane. Its pathway is glycan metabolism; pectin biosynthesis. May be involved in pectin and/or xylans biosynthesis in cell walls. This is Probable galacturonosyltransferase 10 (GAUT10) from Arabidopsis thaliana (Mouse-ear cress).